Consider the following 197-residue polypeptide: CASP-like protein 1B2 (197 aa).

A2 carries the N-acetylalanine modification. The Cytoplasmic portion of the chain corresponds to 2-17; sequence AREKIVVAGGSTKSWK. The chain crosses the membrane as a helical span at residues 18 to 38; the sequence is LLLGLRVFAFMATLAAAIVMS. Over 39-69 the chain is Extracellular; that stretch reads LNKETKTLVVATIGTLPIKATLTAKFQDTPA. A helical membrane pass occupies residues 70–90; that stretch reads FVFFVIANVMVSFHNLLMIVL. The Cytoplasmic segment spans residues 91–106; the sequence is QIFSRKLEYKGVRLLS. The chain crosses the membrane as a helical span at residues 107-127; the sequence is IAILDMLNATLVSAAANAAVF. Residues 128–156 are Extracellular-facing; that stretch reads VAELGKNGNKHAKWNKVCDRFATYCDHGA. The helical transmembrane segment at 157 to 177 threads the bilayer; it reads GALIAAFAGVILMLLVSSVSI. At 178-197 the chain is on the cytoplasmic side; the sequence is SRLLINSKHLSTTATTTAVV.

It belongs to the Casparian strip membrane proteins (CASP) family. In terms of assembly, homodimer and heterodimers.

It localises to the cell membrane. The protein is CASP-like protein 1B2 of Arabidopsis lyrata subsp. lyrata (Lyre-leaved rock-cress).